The following is a 458-amino-acid chain: UDP-N-acetylglucosamine 1-carboxyvinyltransferase (458 aa).

Residue 34 to 35 (KN) participates in phosphoenolpyruvate binding. A UDP-N-acetyl-alpha-D-glucosamine-binding site is contributed by arginine 104. Catalysis depends on cysteine 128, which acts as the Proton donor. A 2-(S-cysteinyl)pyruvic acid O-phosphothioketal modification is found at cysteine 128. Positions 319 and 341 each coordinate UDP-N-acetyl-alpha-D-glucosamine.

It belongs to the EPSP synthase family. MurA subfamily.

It localises to the cytoplasm. The catalysed reaction is phosphoenolpyruvate + UDP-N-acetyl-alpha-D-glucosamine = UDP-N-acetyl-3-O-(1-carboxyvinyl)-alpha-D-glucosamine + phosphate. The protein operates within cell wall biogenesis; peptidoglycan biosynthesis. In terms of biological role, cell wall formation. Adds enolpyruvyl to UDP-N-acetylglucosamine. The protein is UDP-N-acetylglucosamine 1-carboxyvinyltransferase of Prochlorococcus marinus (strain MIT 9515).